Consider the following 371-residue polypeptide: MGSLPDQSSCEEFTDSQQDKMTKLLAMQLGPEYISRRSGPGGGSVTYLEAWKAIELANEIFGFNGWSSSIQDIHVDYVEETKEKKFNVGISVIVRVTLKDGSFHEDVGYGSIENCRVKALAYEKCKKEGTTDALKRALRNFGSSMGNCLYDKRYIQKILKMAPAQAEFNYDNLLRANKRPYARFAQKVSTPIESHANKSVKLEHKNSIEKKISNVDKPISDLIENDIHESLPALQNPPIQSHSETDLYADEELDSILMHHERPPIPESPRVEEFEELLNQFEGDEKVSVDKIDAHDKMTEAQVVKIPPVQFMNARVAAAENPHIKHEGMAFQLHKKSNSILKSSNIDHNRSMPIRRPSLTSNNSANTFSTK.

Positions 346–371 are disordered; it reads IDHNRSMPIRRPSLTSNNSANTFSTK. A compositionally biased stretch (polar residues) spans 358–371; it reads SLTSNNSANTFSTK.

This sequence belongs to the RAD52 family. In terms of assembly, interacts with rph51 and rph54.

Active in the repair of DNA damage and in mating-type switching. Probably involved in the repair of DNA double-strands breaks. Has a role in promoting S phase completion. In Schizosaccharomyces pombe (strain 972 / ATCC 24843) (Fission yeast), this protein is DNA repair and recombination protein rti1 (rti1).